The following is a 237-amino-acid chain: LexA repressor (237 aa).

A DNA-binding region (H-T-H motif) is located at residues 26–46 (FDEMKIALELTSKSGIHRLIT). Residues Ser158 and Lys196 each act as for autocatalytic cleavage activity in the active site.

The protein belongs to the peptidase S24 family. In terms of assembly, homodimer.

It catalyses the reaction Hydrolysis of Ala-|-Gly bond in repressor LexA.. Its function is as follows. Represses a number of genes involved in the response to DNA damage (SOS response), including recA and lexA. In the presence of single-stranded DNA, RecA interacts with LexA causing an autocatalytic cleavage which disrupts the DNA-binding part of LexA, leading to derepression of the SOS regulon and eventually DNA repair. The chain is LexA repressor from Bartonella quintana (strain Toulouse) (Rochalimaea quintana).